Here is a 318-residue protein sequence, read N- to C-terminus: Methionyl-tRNA formyltransferase (318 aa).

Residue 112 to 115 (SILP) participates in (6S)-5,6,7,8-tetrahydrofolate binding.

Belongs to the Fmt family.

It carries out the reaction L-methionyl-tRNA(fMet) + (6R)-10-formyltetrahydrofolate = N-formyl-L-methionyl-tRNA(fMet) + (6S)-5,6,7,8-tetrahydrofolate + H(+). Functionally, attaches a formyl group to the free amino group of methionyl-tRNA(fMet). The formyl group appears to play a dual role in the initiator identity of N-formylmethionyl-tRNA by promoting its recognition by IF2 and preventing the misappropriation of this tRNA by the elongation apparatus. This chain is Methionyl-tRNA formyltransferase, found in Shewanella oneidensis (strain ATCC 700550 / JCM 31522 / CIP 106686 / LMG 19005 / NCIMB 14063 / MR-1).